Reading from the N-terminus, the 582-residue chain is DnaJ protein ERDJ3A (582 aa).

Residues 1-25 form the signal peptide; that stretch reads MGIPVRSLLVASIVLSSIALHVAAA. Residues 29-93 enclose the J domain; sequence DPYKVLGVDK…EKRKNYDLYG (65 aa). N-linked (GlcNAc...) asparagine glycosylation is present at Asn61. Residues 178-201 are disordered; sequence GGSQHTGSAGKARRGTKSSGHDSS. Positions 407 to 437 form a coiled coil; it reads VKDLRSGIKELKNLLENFEKKNKKLASNQAK.

As to quaternary structure, interacts with BIP5.

The protein resides in the endoplasmic reticulum. The protein localises to the vacuole. Functionally, may play a role in protein folding in the endoplasmic reticulum. In Oryza sativa subsp. japonica (Rice), this protein is DnaJ protein ERDJ3A.